A 625-amino-acid chain; its full sequence is Basic helix-loop-helix ARNT-like protein 1 (625 aa).

The disordered stretch occupies residues 1-60 (MADQRMDISSTISDFMSPGPTDLLSSSLGTSGVDCNRKRKGSSTDYQESMDTDKDDPHGR). Residue serine 17 is modified to Phosphoserine; by GSK3-beta. Positions 17 to 32 (SPGPTDLLSSSLGTSG) are enriched in low complexity. Residue threonine 21 is modified to Phosphothreonine; by GSK3-beta. The Nuclear localization signal signature appears at 36-41 (NRKRKG). The span at 51 to 60 (DTDKDDPHGR) shows a compositional bias: basic and acidic residues. The 54-residue stretch at 72–125 (NAREAHSQIEKRRRDKMNSFIDELASLVPTCNAMSRKLDKLTVLRMAVQHMKTL) folds into the bHLH domain. Serine 78 is modified (phosphoserine). Serine 90 bears the Phosphoserine; by CK2 mark. Residues 142–152 (LSDDELKHLIL) carry the Nuclear export signal 1 motif. One can recognise a PAS 1 domain in the interval 143 to 215 (SDDELKHLIL…EQLSSSDTAP (73 aa)). A Glycyl lysine isopeptide (Lys-Gly) (interchain with G-Cter in SUMO2 and SUMO3) cross-link involves residue lysine 252. Lysine 259 is covalently cross-linked (Glycyl lysine isopeptide (Lys-Gly) (interchain with G-Cter in SUMO); alternate). Residue lysine 259 forms a Glycyl lysine isopeptide (Lys-Gly) (interchain with G-Cter in SUMO2); alternate linkage. A PAS 2 domain is found at 325–395 (PQPVNGEIRV…ECHRQVLQTR (71 aa)). The Nuclear export signal 2 motif lies at 360-368 (LAYLPQELL). One can recognise a PAC domain in the interval 400 to 443 (TNCYKFKIKDGSFITLRSRWFSFMNPWTKEVEYIVSTNTVVLAN). Disordered stretches follow at residues 454 to 491 (QLTASPRSMDSMLPSGEGGPKRTHPTVPGIPGGTRAGA) and 510 to 594 (GSSP…SPSN). The interval 507–587 (RIRGSSPSSC…IGIDMIDNDQ (81 aa)) is interaction with CIART. The segment covering 510–520 (GSSPSSCGSSP) has biased composition (low complexity). Position 537 is an N6-acetyllysine (lysine 537).

In terms of assembly, component of the circadian clock oscillator which includes the CRY1/2 proteins, CLOCK or NPAS2, BMAL1 or BMAL2, CSNK1D and/or CSNK1E, TIMELESS and the PER1/2/3 proteins. Forms a heterodimer with CLOCK. The CLOCK-BMAL1 heterodimer is required for E-box-dependent transactivation, for CLOCK nuclear translocation and degradation, and, for phosphorylation of both CLOCK and BMAL1. Part of a nuclear complex which also includes RACK1 and PRKCA; RACK1 and PRKCA are recruited to the complex in a circadian manner. Interacts with NPAS2. Interacts with EZH2. Interacts with SUMO3. Interacts with SIRT1. Interacts with AHR. Interacts with ID1, ID2 and ID3. Interacts with DDX4. Interacts with OGT. Interacts with EED and SUZ12. Interacts with MTA1. Interacts with CIART. Interacts with HSP90. Interacts with KAT2B and EP300. Interacts with BHLHE40/DEC1 and BHLHE41/DEC2. Interacts with RELB and the interaction is enhanced in the presence of CLOCK. Interacts with PER1, PER2, CRY1 and CRY2 and this interaction requires a translocation to the nucleus. Interaction of the CLOCK-BMAL1 heterodimer with PER or CRY inhibits transcription activation. Interaction of the CLOCK-BMAL1 with CRY1 is independent of DNA but with PER2 is off DNA. The CLOCK-BMAL1 heterodimer interacts with GSK3B. Interacts with KDM5A. Interacts with KMT2A; in a circadian manner. Interacts with UBE3A. Interacts with PRKCG. Interacts with MAGEL2. Interacts with NCOA2. Interacts with THRAP3. The CLOCK-BMAL1 heterodimer interacts with PASD1. Interacts with PASD1. Interacts with USP9X. Interacts with PIWIL2 (via PIWI domain). Interacts with HDAC3. Interacts with HNF4A. Post-translationally, ubiquitinated, leading to its proteasomal degradation. Deubiquitinated by USP9X. In terms of processing, O-glycosylated; contains O-GlcNAc. O-glycosylation by OGT prevents protein degradation by inhibiting ubiquitination. It also stabilizes the CLOCK-BMAL1 heterodimer thereby increasing CLOCK-BMAL1-mediated transcription of genes in the negative loop of the circadian clock such as PER1/2/3 and CRY1/2. Acetylated on Lys-537 by CLOCK during the repression phase of the circadian cycle. Acetylation facilitates recruitment of CRY1 protein and initiates the repression phase of the circadian cycle. Acetylated at Lys-537 by KAT5 during the activation phase of the cycle, leading to recruitment of the positive transcription elongation factor b (P-TEFb) and BRD4, followed by productive elongation of circadian transcripts. Deacetylated by SIRT1, which may result in decreased protein stability. Post-translationally, phosphorylated upon dimerization with CLOCK. Phosphorylation enhances the transcriptional activity, alters the subcellular localization and decreases the stability of the CLOCK-BMAL1 heterodimer by promoting its degradation. Phosphorylation shows circadian variations in the liver with a peak between CT10 to CT14. Phosphorylation at Ser-90 by CK2 is essential for its nuclear localization, its interaction with CLOCK and controls CLOCK nuclear entry. Dephosphorylation at Ser-78 is important for dimerization with CLOCK and transcriptional activity. In terms of processing, sumoylated on Lys-259 upon dimerization with CLOCK. Predominantly conjugated to poly-SUMO2/3 rather than SUMO1 and the level of these conjugates undergo rhythmic variation, peaking at CT9-CT12. Sumoylation localizes it exclusively to the PML body and promotes its ubiquitination in the PML body, ubiquitin-dependent proteasomal degradation and the transcriptional activity of the CLOCK-BMAL1 heterodimer. Undergoes lysosome-mediated degradation in a time-dependent manner in the liver.

It is found in the nucleus. Its subcellular location is the cytoplasm. The protein localises to the PML body. Functionally, transcriptional activator which forms a core component of the circadian clock. The circadian clock, an internal time-keeping system, regulates various physiological processes through the generation of approximately 24 hour circadian rhythms in gene expression, which are translated into rhythms in metabolism and behavior. It is derived from the Latin roots 'circa' (about) and 'diem' (day) and acts as an important regulator of a wide array of physiological functions including metabolism, sleep, body temperature, blood pressure, endocrine, immune, cardiovascular, and renal function. Consists of two major components: the central clock, residing in the suprachiasmatic nucleus (SCN) of the brain, and the peripheral clocks that are present in nearly every tissue and organ system. Both the central and peripheral clocks can be reset by environmental cues, also known as Zeitgebers (German for 'timegivers'). The predominant Zeitgeber for the central clock is light, which is sensed by retina and signals directly to the SCN. The central clock entrains the peripheral clocks through neuronal and hormonal signals, body temperature and feeding-related cues, aligning all clocks with the external light/dark cycle. Circadian rhythms allow an organism to achieve temporal homeostasis with its environment at the molecular level by regulating gene expression to create a peak of protein expression once every 24 hours to control when a particular physiological process is most active with respect to the solar day. Transcription and translation of core clock components (CLOCK, NPAS2, BMAL1, BMAL2, PER1, PER2, PER3, CRY1 and CRY2) plays a critical role in rhythm generation, whereas delays imposed by post-translational modifications (PTMs) are important for determining the period (tau) of the rhythms (tau refers to the period of a rhythm and is the length, in time, of one complete cycle). A diurnal rhythm is synchronized with the day/night cycle, while the ultradian and infradian rhythms have a period shorter and longer than 24 hours, respectively. Disruptions in the circadian rhythms contribute to the pathology of cardiovascular diseases, cancer, metabolic syndromes and aging. A transcription/translation feedback loop (TTFL) forms the core of the molecular circadian clock mechanism. Transcription factors, CLOCK or NPAS2 and BMAL1 or BMAL2, form the positive limb of the feedback loop, act in the form of a heterodimer and activate the transcription of core clock genes and clock-controlled genes (involved in key metabolic processes), harboring E-box elements (5'-CACGTG-3') within their promoters. The core clock genes: PER1/2/3 and CRY1/2 which are transcriptional repressors form the negative limb of the feedback loop and interact with the CLOCK|NPAS2-BMAL1|BMAL2 heterodimer inhibiting its activity and thereby negatively regulating their own expression. This heterodimer also activates nuclear receptors NR1D1/2 and RORA/B/G, which form a second feedback loop and which activate and repress BMAL1 transcription, respectively. BMAL1 positively regulates myogenesis and negatively regulates adipogenesis via the transcriptional control of the genes of the canonical Wnt signaling pathway. Plays a role in normal pancreatic beta-cell function; regulates glucose-stimulated insulin secretion via the regulation of antioxidant genes NFE2L2/NRF2 and its targets SESN2, PRDX3, CCLC and CCLM. Negatively regulates the mTORC1 signaling pathway; regulates the expression of MTOR and DEPTOR. Controls diurnal oscillations of Ly6C inflammatory monocytes; rhythmic recruitment of the PRC2 complex imparts diurnal variation to chemokine expression that is necessary to sustain Ly6C monocyte rhythms. Regulates the expression of HSD3B2, STAR, PTGS2, CYP11A1, CYP19A1 and LHCGR in the ovary and also the genes involved in hair growth. Plays an important role in adult hippocampal neurogenesis by regulating the timely entry of neural stem/progenitor cells (NSPCs) into the cell cycle and the number of cell divisions that take place prior to cell-cycle exit. Regulates the circadian expression of CIART and KLF11. The CLOCK-BMAL1 heterodimer regulates the circadian expression of SERPINE1/PAI1, VWF, B3, CCRN4L/NOC, NAMPT, DBP, MYOD1, PPARGC1A, PPARGC1B, SIRT1, GYS2, F7, NGFR, GNRHR, BHLHE40/DEC1, ATF4, MTA1, KLF10 and also genes implicated in glucose and lipid metabolism. Promotes rhythmic chromatin opening, regulating the DNA accessibility of other transcription factors. The NPAS2-BMAL1 heterodimer positively regulates the expression of MAOA, F7 and LDHA and modulates the circadian rhythm of daytime contrast sensitivity by regulating the rhythmic expression of adenylate cyclase type 1 (ADCY1) in the retina. The preferred binding motif for the CLOCK-BMAL1 heterodimer is 5'-CACGTGA-3', which contains a flanking adenine nucleotide at the 3-prime end of the canonical 6-nucleotide E-box sequence. CLOCK specifically binds to the half-site 5'-CAC-3', while BMAL1 binds to the half-site 5'-GTGA-3'. The CLOCK-BMAL1 heterodimer also recognizes the non-canonical E-box motifs 5'-AACGTGA-3' and 5'-CATGTGA-3'. Essential for the rhythmic interaction of CLOCK with ASS1 and plays a critical role in positively regulating CLOCK-mediated acetylation of ASS1. Plays a role in protecting against lethal sepsis by limiting the expression of immune checkpoint protein CD274 in macrophages in a PKM2-dependent manner. Regulates the diurnal rhythms of skeletal muscle metabolism via transcriptional activation of genes promoting triglyceride synthesis (DGAT2) and metabolic efficiency (COQ10B). In Pongo abelii (Sumatran orangutan), this protein is Basic helix-loop-helix ARNT-like protein 1 (BMAL1).